We begin with the raw amino-acid sequence, 582 residues long: 2-succinyl-5-enolpyruvyl-6-hydroxy-3-cyclohexene-1-carboxylate synthase (582 aa).

It belongs to the TPP enzyme family. MenD subfamily. Homodimer. It depends on Mg(2+) as a cofactor. Mn(2+) is required as a cofactor. Requires thiamine diphosphate as cofactor.

It catalyses the reaction isochorismate + 2-oxoglutarate + H(+) = 5-enolpyruvoyl-6-hydroxy-2-succinyl-cyclohex-3-ene-1-carboxylate + CO2. Its pathway is quinol/quinone metabolism; 1,4-dihydroxy-2-naphthoate biosynthesis; 1,4-dihydroxy-2-naphthoate from chorismate: step 2/7. The protein operates within cofactor biosynthesis; phylloquinone biosynthesis. Functionally, catalyzes the thiamine diphosphate-dependent decarboxylation of 2-oxoglutarate and the subsequent addition of the resulting succinic semialdehyde-thiamine pyrophosphate anion to isochorismate to yield 2-succinyl-5-enolpyruvyl-6-hydroxy-3-cyclohexene-1-carboxylate (SEPHCHC). The sequence is that of 2-succinyl-5-enolpyruvyl-6-hydroxy-3-cyclohexene-1-carboxylate synthase from Synechococcus elongatus (strain ATCC 33912 / PCC 7942 / FACHB-805) (Anacystis nidulans R2).